The chain runs to 195 residues: Achaete-scute homolog 1b (195 aa).

The bHLH domain maps to 66–118; that stretch reads MAVARRNERERNRVKQVNMGFQTLRQHVPNGAANKKMSKVETLRSAVEYIRAL. The interval 141 to 164 is disordered; that stretch reads VSNAYSAGPESPHSAYSSDEGSYE.

In terms of assembly, efficient DNA binding requires dimerization with another bHLH protein. As to expression, in the 24 hours embryo, expressed in hindbrain close to the anterior and posterior boundaries of rhombomeres 2-6 and in ventral cells close to the floor plate of most rhombomeres. Also expressed in the telencephalon, diencephalon, tegmentum and spinal cord at sites distinct from those expressing ascl1a. Not expressed in the adenohypophysis.

It is found in the nucleus. Transcriptional regulator. May mediate transcription activation by binding to the E box-containing promoter. Involved in neurogenesis. Involved in maintaining rhombomere boundaries in the hindbrain, probably via up-regulation of delta expression. May mediate transcription activation by binding to the E box-containing promoter. The sequence is that of Achaete-scute homolog 1b from Danio rerio (Zebrafish).